Consider the following 182-residue polypeptide: Large ribosomal subunit protein uL5 (182 aa).

This sequence belongs to the universal ribosomal protein uL5 family. In terms of assembly, part of the 50S ribosomal subunit; part of the 5S rRNA/L5/L18/L25 subcomplex. Contacts the 5S rRNA and the P site tRNA. Forms a bridge to the 30S subunit in the 70S ribosome.

Functionally, this is one of the proteins that bind and probably mediate the attachment of the 5S RNA into the large ribosomal subunit, where it forms part of the central protuberance. In the 70S ribosome it contacts protein S13 of the 30S subunit (bridge B1b), connecting the 2 subunits; this bridge is implicated in subunit movement. Contacts the P site tRNA; the 5S rRNA and some of its associated proteins might help stabilize positioning of ribosome-bound tRNAs. The sequence is that of Large ribosomal subunit protein uL5 from Thermus thermophilus (strain ATCC BAA-163 / DSM 7039 / HB27).